The primary structure comprises 349 residues: Protein RecA (349 aa).

65-72 lines the ATP pocket; it reads GPESSGKT. Positions 329–349 are disordered; the sequence is KASDQTAAHDETEEEPDLLES. Over residues 339–349 the composition is skewed to acidic residues; that stretch reads ETEEEPDLLES.

This sequence belongs to the RecA family.

The protein resides in the cytoplasm. Can catalyze the hydrolysis of ATP in the presence of single-stranded DNA, the ATP-dependent uptake of single-stranded DNA by duplex DNA, and the ATP-dependent hybridization of homologous single-stranded DNAs. It interacts with LexA causing its activation and leading to its autocatalytic cleavage. The polypeptide is Protein RecA (Acinetobacter baylyi (strain ATCC 33305 / BD413 / ADP1)).